Reading from the N-terminus, the 47-residue chain is Large ribosomal subunit protein bL34 (47 aa).

2 stretches are compositionally biased toward basic residues: residues 1-22 (MAKG…HGFR) and 36-47 (ARRRKGRKSLTA). The interval 1–47 (MAKGKRTFQPNNRRRSRVHGFRSRMSTRAGRAIVSARRRKGRKSLTA) is disordered.

Belongs to the bacterial ribosomal protein bL34 family.

This Corynebacterium kroppenstedtii (strain DSM 44385 / JCM 11950 / CIP 105744 / CCUG 35717) protein is Large ribosomal subunit protein bL34.